The following is a 426-amino-acid chain: UPF0229 protein YeaH (426 aa).

Residues 78–92 (GNDHFIQNDRIERPQ) are compositionally biased toward basic and acidic residues. A disordered region spans residues 78–108 (GNDHFIQNDRIERPQDGGGSGSGNGQASQDG).

Belongs to the UPF0229 family.

In Salmonella arizonae (strain ATCC BAA-731 / CDC346-86 / RSK2980), this protein is UPF0229 protein YeaH.